The sequence spans 305 residues: Ornithine carbamoyltransferase, catabolic (305 aa).

Residues 50–53 (STRT), Q77, R101, and 128–131 (HPLQ) contribute to the carbamoyl phosphate site. L-ornithine contacts are provided by residues N159, D223, and 227 to 228 (SM). Residues 263 to 264 (CL) and R291 contribute to the carbamoyl phosphate site.

This sequence belongs to the aspartate/ornithine carbamoyltransferase superfamily. OTCase family.

The protein resides in the cytoplasm. It catalyses the reaction carbamoyl phosphate + L-ornithine = L-citrulline + phosphate + H(+). It participates in amino-acid degradation; L-arginine degradation via ADI pathway; carbamoyl phosphate from L-arginine: step 2/2. Reversibly catalyzes the transfer of the carbamoyl group from carbamoyl phosphate (CP) to the N(epsilon) atom of ornithine (ORN) to produce L-citrulline. This chain is Ornithine carbamoyltransferase, catabolic, found in Thermoplasma volcanium (strain ATCC 51530 / DSM 4299 / JCM 9571 / NBRC 15438 / GSS1).